The chain runs to 413 residues: Sulfoquinovose isomerase (413 aa).

Residues R55, Y111, N172, H176, and R238 each contribute to the 6-sulfo-beta-D-quinovose site. Catalysis depends on H248, which acts as the Proton donor/acceptor. 4 residues coordinate 6-sulfo-beta-D-quinovose: E251, Q362, Q379, and H383. H383 serves as the catalytic Proton donor/acceptor.

It belongs to the N-acylglucosamine 2-epimerase family. As to quaternary structure, homohexamer.

The enzyme catalyses 6-sulfo-beta-D-quinovose = 6-deoxy-6-sulfo-D-fructose. It carries out the reaction 6-sulfo-beta-D-quinovose = 6-sulfo-D-rhamnose. With respect to regulation, significantly inhibited by Cu(2+), Fe(3+) and Co(2+). Partially inhibited by Mg(2+), Ca(2+) and Mn(2+). Also inhibited by ATP, ADP, dATP, TTP and GTP. In terms of biological role, catalyzes the isomerization of sulfoquinovose (SQ) to 6-deoxy-6-sulfo-D-fructose (SF). Can also catalyze the interconversion of SQ and sulforhamnose (SR). Has a clear preference for beta-SQ and little-to-no activity on alpha-SQ. In vitro, can also catalyze the interconversion of mannose, fructose and glucose, or lyxose and xylulose, but has extremely low activity with glucose. This is Sulfoquinovose isomerase (yihS) from Escherichia coli (strain K12).